A 365-amino-acid polypeptide reads, in one-letter code: MSVLKNDRLLRALQRQPVDRTPVWMMRQAGRYLPEYRELRAQAGSFMKLAGTPELACEVTLQPLRRFPLDAAILFSDILTIPDAMGLGLRFLPGEGPVFDHPVRSAADIEHLPVPDPEDELRYVTDAVRLIRRELDGEVPLIGFAGSPWTLATYMIEGGSSKDYRRCKAMLYDEPELLHRLLDKVAQATTAYLNAQIAAGAQAIMIFDSWGGALAHDAYRLFSLAYMERIVRNLTREADGRHVPVVLFTKGGGQWLEAMAATGCDGLGLDWTTNLGQARDRVGDRVALQGNLDPCVLYASPETIRNEVARVLADYGPGPGHVFNLGHGIHPAIPPEHAGAMIDAVHQLSPRYHEQQAEASSLTQG.

Substrate is bound by residues 27–31 (RQAGR), Asp-77, Tyr-154, Ser-209, and His-327.

Belongs to the uroporphyrinogen decarboxylase family. As to quaternary structure, homodimer.

It localises to the cytoplasm. It carries out the reaction uroporphyrinogen III + 4 H(+) = coproporphyrinogen III + 4 CO2. It participates in porphyrin-containing compound metabolism; protoporphyrin-IX biosynthesis; coproporphyrinogen-III from 5-aminolevulinate: step 4/4. Catalyzes the decarboxylation of four acetate groups of uroporphyrinogen-III to yield coproporphyrinogen-III. This is Uroporphyrinogen decarboxylase from Alkalilimnicola ehrlichii (strain ATCC BAA-1101 / DSM 17681 / MLHE-1).